The primary structure comprises 573 residues: Flagellin B (573 aa).

Belongs to the bacterial flagellin family. As to quaternary structure, heteromer of FlaA and FlaB. A flagellar filament composed exclusively of FlaA is indistinguishable in length from that of the wild-type and shows a slight reduction in motility. The flagellar filament composed exclusively of the FlaB is severely truncated in length and greatly reduced in motility. Thus, while both flagellins are not necessary for motility, both are required for a fully active flagellar filament.

The protein resides in the secreted. It localises to the bacterial flagellum. Its function is as follows. Flagellin is the subunit protein which polymerizes to form the filaments of bacterial flagella. In Campylobacter coli, this protein is Flagellin B (flaB).